The chain runs to 489 residues: UDP-N-acetylmuramate--L-alanine ligase (489 aa).

128–134 (GTHGKTT) serves as a coordination point for ATP.

The protein belongs to the MurCDEF family.

The protein resides in the cytoplasm. The enzyme catalyses UDP-N-acetyl-alpha-D-muramate + L-alanine + ATP = UDP-N-acetyl-alpha-D-muramoyl-L-alanine + ADP + phosphate + H(+). It functions in the pathway cell wall biogenesis; peptidoglycan biosynthesis. Its function is as follows. Cell wall formation. The polypeptide is UDP-N-acetylmuramate--L-alanine ligase (Shewanella pealeana (strain ATCC 700345 / ANG-SQ1)).